Here is a 141-residue protein sequence, read N- to C-terminus: Anthrone oxygenase ptaC (141 aa).

A signal peptide spans 1 to 19 (MMGLPLMAVPMLLDTGADP). 2 consecutive transmembrane segments (helical) span residues 33–53 (GVRTMPPLAITTFILYVWTII) and 64–84 (ILAVAAVVTMGMIPFTWYVLA).

It belongs to the anthrone oxygenase family.

It is found in the membrane. It functions in the pathway secondary metabolite biosynthesis. Functionally, anthrone oxygenase; part of the gene cluster that mediates the biosynthesis of pestheic acid, a diphenyl ether which is a biosynthetic precursor of the unique chloropupukeananes. The biosynthesis initiates from condensation of acetate and malonate units catalyzed by the non-reducing PKS ptaA. As the ptaA protein is TE/CLC domain-deficient, hydrolysis and Claisen cyclization of the polyketide could be catalyzed by ptaB containing a beta-lactamase domain. The ptaB protein might hydrolyze the thioester bond between the ACP of ptaA and the intermediate to release atrochrysone carboxylic acid, which is spontaneously dehydrated to form endocrocin anthrone. Endocrocin anthrone is then converted to endocrocin, catalyzed by the anthrone oxygenase ptaC. Spontaneous decarboxylation of endocrocin occurs to generate emodin. An O-methyltransferase (ptaH or ptaI) could methylate emodin to form physcion. PtaJ could then catalyze the oxidative cleavage of physcion, and rotation of the intermediate could then afford desmethylisosulochrin. PtaF, a putative NADH-dependent oxidoreductase, might also participate in the oxidative cleavage step. Desmethylisosulochrin is then transformed by another O-methyltransferase (ptaH or ptaI) to form isosulochrin. Chlorination of isosulochrin by ptaM in the cyclohexadienone B ring then produces chloroisosulochrin. PtaE is responsible for the oxidative coupling reactions of both benzophenones isosulochrin and chloroisosulochrin to RES-1214-1 and pestheic acid respectively, regardless of chlorination. In Pestalotiopsis fici (strain W106-1 / CGMCC3.15140), this protein is Anthrone oxygenase ptaC.